Here is a 203-residue protein sequence, read N- to C-terminus: Small ribosomal subunit protein uS4 (203 aa).

Positions arginine 93 to valine 156 constitute an S4 RNA-binding domain.

The protein belongs to the universal ribosomal protein uS4 family. Part of the 30S ribosomal subunit. Contacts protein S5. The interaction surface between S4 and S5 is involved in control of translational fidelity.

Its function is as follows. One of the primary rRNA binding proteins, it binds directly to 16S rRNA where it nucleates assembly of the body of the 30S subunit. Functionally, with S5 and S12 plays an important role in translational accuracy. The sequence is that of Small ribosomal subunit protein uS4 from Streptococcus sanguinis (strain SK36).